We begin with the raw amino-acid sequence, 85 residues long: Type 3 secretion system needle filament protein (85 aa).

Residues 13–41 (LDTVANALKEQANAANKDVNDAIKALQGT) adopt a coiled-coil conformation.

In terms of assembly, the core secretion machinery of the T3SS is composed of approximately 20 different proteins, including cytoplasmic components, a base, an export apparatus and a needle. This subunit polymerizes and forms the helical needle filament. Forms a stable heterotrimeric complex with PscE and PscG in the cytoplasm, blocking it in a monomeric state and preventing its polymerization.

The protein resides in the secreted. It is found in the cell surface. Component of the type III secretion system (T3SS), also called injectisome, which is used to inject bacterial effector proteins into eukaryotic host cells, facilitating the establishment and dissemination of infection. PscF/SctF forms the external needle filament that protrudes from the bacterial surface. The polypeptide is Type 3 secretion system needle filament protein (Pseudomonas aeruginosa (strain ATCC 15692 / DSM 22644 / CIP 104116 / JCM 14847 / LMG 12228 / 1C / PRS 101 / PAO1)).